Reading from the N-terminus, the 1320-residue chain is FERM and PDZ domain-containing protein 4 (1320 aa).

The WW domain maps to glutamine 33–phenylalanine 66. One can recognise a PDZ domain in the interval lysine 78 to tyrosine 155. One can recognise an FERM domain in the interval asparagine 204 to arginine 519. Disordered regions lie at residues alanine 809–valine 847, tyrosine 897–serine 927, threonine 949–valine 981, lysine 1024–threonine 1050, proline 1114–alanine 1139, and glycine 1204–glutamate 1274. A compositionally biased stretch (low complexity) spans glutamate 900–glutamate 913. Polar residues predominate over residues glycine 1204–aspartate 1217. Residues glycine 1223 to proline 1232 show a composition bias toward low complexity.

As to quaternary structure, interacts (via C-terminus) with DLG1, DLG2, DLG3 and DLG4/PSD95. Interacts (via N-terminus) with ARHGEF7; the interaction is mediated by the PDZ domain. Interacts with GPSM2 (via TPR repeat region). As to expression, expressed in various regions of the brain, including cortex, hippocampus, cerebellum, olfactory bulb and medial habenular nucleus.

It localises to the cell projection. The protein resides in the dendritic spine. In terms of biological role, positive regulator of dendritic spine morphogenesis and density. Required for the maintenance of excitatory synaptic transmission. Binds phosphatidylinositol 4,5-bisphosphate. This is FERM and PDZ domain-containing protein 4 (Frmpd4) from Mus musculus (Mouse).